Reading from the N-terminus, the 383-residue chain is Glucose-1-phosphate adenylyltransferase (383 aa).

Alpha-D-glucose 1-phosphate contacts are provided by residues Tyr-99, Gly-164, 179–180, and Ser-190; that span reads EK.

It belongs to the bacterial/plant glucose-1-phosphate adenylyltransferase family. Homotetramer.

It catalyses the reaction alpha-D-glucose 1-phosphate + ATP + H(+) = ADP-alpha-D-glucose + diphosphate. It participates in glycan biosynthesis; glycogen biosynthesis. Its function is as follows. Involved in the biosynthesis of ADP-glucose, a building block required for the elongation reactions to produce glycogen. Catalyzes the reaction between ATP and alpha-D-glucose 1-phosphate (G1P) to produce pyrophosphate and ADP-Glc. This Halalkalibacterium halodurans (strain ATCC BAA-125 / DSM 18197 / FERM 7344 / JCM 9153 / C-125) (Bacillus halodurans) protein is Glucose-1-phosphate adenylyltransferase.